Here is a 239-residue protein sequence, read N- to C-terminus: Terpene cyclase idtB (239 aa).

5 helical membrane-spanning segments follow: residues 20-40 (MADTFVAGMGLGWIVNYALMI), 50-70 (CMALLPLCNNIAWELTYTIVY), 75-95 (RVELLVFAIGLTLNFFIMVGA), 113-133 (AGFILLVGTLLCFTGHVALAM), and 138-158 (GLAYSWGAVVCQLALSIGGLF). Residue asparagine 164 is glycosylated (N-linked (GlcNAc...) asparagine). The chain crosses the membrane as a helical span at residues 197–217 (EVFGWLASPLVLWSLVTFLLA).

Belongs to the paxB family.

The protein resides in the membrane. It participates in secondary metabolite biosynthesis. Its function is as follows. Terpene cyclase; part of the gene cluster that mediates the biosynthesis of paspalitrems, indole-diterpene (IDT) mycotoxins that are potent tremorgens in mammals. The geranylgeranyl diphosphate (GGPP) synthase idtG is proposed to catalyze the first step in IDT biosynthesis via catalysis of a series of iterative condensations of isopentenyl diphosphate (IPP) with dimethylallyl diphosphate (DMAPP), geranyl diphosphate (GPP), and farnesyl diphosphate (FPP), to form GGPP. Condensation of indole-3-glycerol phosphate with GGPP by the prenyltransferase idtC then forms 3-geranylgeranylindole (3-GGI). Epoxidation of the two terminal alkenes of the geranylgeranyl moiety by the FAD-dependent monooxygenase idtM, and cyclization by the terpene cyclase idtB then leads to the production of paspaline. The cytochrome P450 monooxygenase idtP then catalyzes oxidative elimination of the pendant methyl group at C-12 of paspaline and generates the C-10 ketone to yield 13-desoxypaxilline. The cytochrome P450 monooxygenase idtQ may catalyze the C-13 oxidation of 13-desoxypaxilline to afford paxilline. Considering that both paspalicine and paxilline were detected in C.paspali, idtQ also catalyzes the formation of paspalinine from 13-desoxypaxilline via paspalicine as an intermediate. Finally, the alpha-prenyltransferase idtF prenylates paspalinine at the C-20 or the C-21 positions to yield paspalitrems A and C, respectively. The hydroxylation of paspalitrem A at C-32 by a still unknown oxidase affords paspalitrem B. The protein is Terpene cyclase idtB of Claviceps paspali (Rye ergot fungus).